The following is an 83-amino-acid chain: MSSGGLLLLLGLLTLWMELTPVSSKNRPPFCNLLPEPGRCNAIVRAFYYNSRPRKCLEFPYGGCGGNANNFKTIEECQRTCAG.

The signal sequence occupies residues 1–24; it reads MSSGGLLLLLGLLTLWMELTPVSS. Residues 31–81 enclose the BPTI/Kunitz inhibitor domain; sequence CNLLPEPGRCNAIVRAFYYNSRPRKCLEFPYGGCGGNANNFKTIEECQRTC. Disulfide bonds link Cys31–Cys81, Cys40–Cys64, and Cys56–Cys77.

It belongs to the venom Kunitz-type family. In terms of tissue distribution, expressed by the venom gland.

It localises to the secreted. Shows weak binding and inhibition of MMP-2 and shows an activity in inhibiting migration and invasion of neuroblastoma. The polypeptide is Kunitz-type serine protease inhibitor PILP-2 (Bungarus multicinctus (Many-banded krait)).